A 197-amino-acid chain; its full sequence is Holliday junction branch migration complex subunit RuvA (197 aa).

The interval 1 to 64 is domain I; sequence MIARLAGKVA…QDAIELYGFA (64 aa). Residues 65 to 141 are domain II; that stretch reads SEDEEAVFRA…LALLARAAGP (77 aa). A flexible linker region spans residues 141-145; the sequence is PARAK. The interval 146-197 is domain III; the sequence is PGAGVVEQLRQALVNLGYKPPQADAAADALRDEAEGKKLDELLREALKRLRG.

It belongs to the RuvA family. In terms of assembly, homotetramer. Forms an RuvA(8)-RuvB(12)-Holliday junction (HJ) complex. HJ DNA is sandwiched between 2 RuvA tetramers; dsDNA enters through RuvA and exits via RuvB. An RuvB hexamer assembles on each DNA strand where it exits the tetramer. Each RuvB hexamer is contacted by two RuvA subunits (via domain III) on 2 adjacent RuvB subunits; this complex drives branch migration. In the full resolvosome a probable DNA-RuvA(4)-RuvB(12)-RuvC(2) complex forms which resolves the HJ.

The protein localises to the cytoplasm. In terms of biological role, the RuvA-RuvB-RuvC complex processes Holliday junction (HJ) DNA during genetic recombination and DNA repair, while the RuvA-RuvB complex plays an important role in the rescue of blocked DNA replication forks via replication fork reversal (RFR). RuvA specifically binds to HJ cruciform DNA, conferring on it an open structure. The RuvB hexamer acts as an ATP-dependent pump, pulling dsDNA into and through the RuvAB complex. HJ branch migration allows RuvC to scan DNA until it finds its consensus sequence, where it cleaves and resolves the cruciform DNA. The sequence is that of Holliday junction branch migration complex subunit RuvA from Anaeromyxobacter sp. (strain Fw109-5).